Here is a 207-residue protein sequence, read N- to C-terminus: Thiamine-phosphate synthase (207 aa).

Residues Q38–K42 and N70 each bind 4-amino-2-methyl-5-(diphosphooxymethyl)pyrimidine. 2 residues coordinate Mg(2+): D71 and D90. Residue T109 participates in 4-amino-2-methyl-5-(diphosphooxymethyl)pyrimidine binding. Residue T135 to S137 coordinates 2-[(2R,5Z)-2-carboxy-4-methylthiazol-5(2H)-ylidene]ethyl phosphate. K138 contacts 4-amino-2-methyl-5-(diphosphooxymethyl)pyrimidine. 2-[(2R,5Z)-2-carboxy-4-methylthiazol-5(2H)-ylidene]ethyl phosphate-binding positions include G165 and I185 to S186.

The protein belongs to the thiamine-phosphate synthase family. The cofactor is Mg(2+).

The enzyme catalyses 2-[(2R,5Z)-2-carboxy-4-methylthiazol-5(2H)-ylidene]ethyl phosphate + 4-amino-2-methyl-5-(diphosphooxymethyl)pyrimidine + 2 H(+) = thiamine phosphate + CO2 + diphosphate. It catalyses the reaction 2-(2-carboxy-4-methylthiazol-5-yl)ethyl phosphate + 4-amino-2-methyl-5-(diphosphooxymethyl)pyrimidine + 2 H(+) = thiamine phosphate + CO2 + diphosphate. It carries out the reaction 4-methyl-5-(2-phosphooxyethyl)-thiazole + 4-amino-2-methyl-5-(diphosphooxymethyl)pyrimidine + H(+) = thiamine phosphate + diphosphate. The protein operates within cofactor biosynthesis; thiamine diphosphate biosynthesis; thiamine phosphate from 4-amino-2-methyl-5-diphosphomethylpyrimidine and 4-methyl-5-(2-phosphoethyl)-thiazole: step 1/1. Condenses 4-methyl-5-(beta-hydroxyethyl)thiazole monophosphate (THZ-P) and 2-methyl-4-amino-5-hydroxymethyl pyrimidine pyrophosphate (HMP-PP) to form thiamine monophosphate (TMP). This chain is Thiamine-phosphate synthase, found in Clostridium perfringens (strain SM101 / Type A).